Consider the following 384-residue polypeptide: Chaperone protein DnaJ (384 aa).

The J domain maps to 5 to 70; the sequence is DFYEVLGVSK…DKKAAYDRYG (66 aa). The segment at 143–221 adopts a CR-type zinc-finger fold; the sequence is GAQKTITVPG…CHGSGRIEKE (79 aa). 8 residues coordinate Zn(2+): Cys156, Cys159, Cys173, Cys176, Cys195, Cys198, Cys209, and Cys212. CXXCXGXG motif repeat units lie at residues 156–163, 173–180, 195–202, and 209–216; these read CGSCNGTG, CPTCSGLG, CPTCGGQG, and CRVCHGSG.

The protein belongs to the DnaJ family. As to quaternary structure, homodimer. Zn(2+) is required as a cofactor.

Its subcellular location is the cytoplasm. Participates actively in the response to hyperosmotic and heat shock by preventing the aggregation of stress-denatured proteins and by disaggregating proteins, also in an autonomous, DnaK-independent fashion. Unfolded proteins bind initially to DnaJ; upon interaction with the DnaJ-bound protein, DnaK hydrolyzes its bound ATP, resulting in the formation of a stable complex. GrpE releases ADP from DnaK; ATP binding to DnaK triggers the release of the substrate protein, thus completing the reaction cycle. Several rounds of ATP-dependent interactions between DnaJ, DnaK and GrpE are required for fully efficient folding. Also involved, together with DnaK and GrpE, in the DNA replication of plasmids through activation of initiation proteins. The chain is Chaperone protein DnaJ from Rhodobacter capsulatus (Rhodopseudomonas capsulata).